A 329-amino-acid chain; its full sequence is 4-hydroxythreonine-4-phosphate dehydrogenase (329 aa).

Substrate is bound by residues His136 and Thr137. Residues His166, His211, and His266 each contribute to the a divalent metal cation site. Residues Lys274, Asn283, and Arg292 each contribute to the substrate site.

It belongs to the PdxA family. As to quaternary structure, homodimer. Requires Zn(2+) as cofactor. Mg(2+) serves as cofactor. The cofactor is Co(2+).

Its subcellular location is the cytoplasm. It carries out the reaction 4-(phosphooxy)-L-threonine + NAD(+) = 3-amino-2-oxopropyl phosphate + CO2 + NADH. The protein operates within cofactor biosynthesis; pyridoxine 5'-phosphate biosynthesis; pyridoxine 5'-phosphate from D-erythrose 4-phosphate: step 4/5. Catalyzes the NAD(P)-dependent oxidation of 4-(phosphooxy)-L-threonine (HTP) into 2-amino-3-oxo-4-(phosphooxy)butyric acid which spontaneously decarboxylates to form 3-amino-2-oxopropyl phosphate (AHAP). The chain is 4-hydroxythreonine-4-phosphate dehydrogenase from Pseudomonas syringae pv. tomato (strain ATCC BAA-871 / DC3000).